The primary structure comprises 134 residues: Probable salivary secreted peptide (134 aa).

An N-terminal signal peptide occupies residues 1 to 24; that stretch reads MGAQKTIAYLAIIAIAVIFAQVNT.

The protein resides in the secreted. This is Probable salivary secreted peptide from Bombus ignitus (Bumblebee).